The chain runs to 232 residues: Thiamine import ATP-binding protein ThiQ (232 aa).

Positions 2-230 constitute an ABC transporter domain; sequence LKLTDITWLY…KASASAILGI (229 aa). 32 to 39 is a binding site for ATP; sequence GPSGAGKS.

This sequence belongs to the ABC transporter superfamily. Thiamine importer (TC 3.A.1.19.1) family. As to quaternary structure, the complex is composed of two ATP-binding proteins (ThiQ), two transmembrane proteins (ThiP) and a solute-binding protein (ThiB).

It is found in the cell inner membrane. The catalysed reaction is thiamine(out) + ATP + H2O = thiamine(in) + ADP + phosphate + H(+). Its function is as follows. Part of the ABC transporter complex ThiBPQ involved in thiamine import. Responsible for energy coupling to the transport system. This Shigella flexneri serotype 5b (strain 8401) protein is Thiamine import ATP-binding protein ThiQ.